A 127-amino-acid chain; its full sequence is Large ribosomal subunit protein uL22 (127 aa).

The segment covering 106-117 (GAPEGVPVGGAV) has biased composition (low complexity). Residues 106–127 (GAPEGVPVGGAVDTPGDEEEEE) are disordered.

This sequence belongs to the universal ribosomal protein uL22 family. Part of the 50S ribosomal subunit.

This protein binds specifically to 23S rRNA; its binding is stimulated by other ribosomal proteins, e.g. L4, L17, and L20. It is important during the early stages of 50S assembly. It makes multiple contacts with different domains of the 23S rRNA in the assembled 50S subunit and ribosome. Its function is as follows. The globular domain of the protein is located near the polypeptide exit tunnel on the outside of the subunit, while an extended beta-hairpin is found that lines the wall of the exit tunnel in the center of the 70S ribosome. The polypeptide is Large ribosomal subunit protein uL22 (Rubrobacter xylanophilus (strain DSM 9941 / JCM 11954 / NBRC 16129 / PRD-1)).